Here is a 347-residue protein sequence, read N- to C-terminus: Probable arabinogalactan endo-beta-1,4-galactanase A (347 aa).

The first 16 residues, 1–16, serve as a signal peptide directing secretion; it reads MLFSYLLATLPLLANA. Catalysis depends on E150, which acts as the Proton donor. The Nucleophile role is filled by E260.

It belongs to the glycosyl hydrolase 53 family.

It is found in the secreted. The catalysed reaction is The enzyme specifically hydrolyzes (1-&gt;4)-beta-D-galactosidic linkages in type I arabinogalactans.. Endogalactanase involved in the degradation of plant cell wall polysaccharides, and more particularly of hairy regions of pectin. The chain is Probable arabinogalactan endo-beta-1,4-galactanase A (galA) from Aspergillus flavus (strain ATCC 200026 / FGSC A1120 / IAM 13836 / NRRL 3357 / JCM 12722 / SRRC 167).